The primary structure comprises 68 residues: ATP synthase subunit c (68 aa).

2 helical membrane-spanning segments follow: residues 5-25 (AAAI…GMIV) and 47-67 (FIGV…AFMV).

The protein belongs to the ATPase C chain family. As to quaternary structure, F-type ATPases have 2 components, F(1) - the catalytic core - and F(0) - the membrane proton channel. F(1) has five subunits: alpha(3), beta(3), gamma(1), delta(1), epsilon(1). F(0) has three main subunits: a(1), b(2) and c(10-14). The alpha and beta chains form an alternating ring which encloses part of the gamma chain. F(1) is attached to F(0) by a central stalk formed by the gamma and epsilon chains, while a peripheral stalk is formed by the delta and b chains.

The protein localises to the cell membrane. In terms of biological role, f(1)F(0) ATP synthase produces ATP from ADP in the presence of a proton or sodium gradient. F-type ATPases consist of two structural domains, F(1) containing the extramembraneous catalytic core and F(0) containing the membrane proton channel, linked together by a central stalk and a peripheral stalk. During catalysis, ATP synthesis in the catalytic domain of F(1) is coupled via a rotary mechanism of the central stalk subunits to proton translocation. Its function is as follows. Key component of the F(0) channel; it plays a direct role in translocation across the membrane. A homomeric c-ring of between 10-14 subunits forms the central stalk rotor element with the F(1) delta and epsilon subunits. The protein is ATP synthase subunit c of Oceanobacillus iheyensis (strain DSM 14371 / CIP 107618 / JCM 11309 / KCTC 3954 / HTE831).